The sequence spans 118 residues: Basic phospholipase A2 PA-11 (118 aa).

7 cysteine pairs are disulfide-bonded: Cys11/Cys71, Cys27/Cys117, Cys29/Cys45, Cys44/Cys98, Cys51/Cys91, Cys60/Cys84, and Cys78/Cys89. Residues Tyr28, Gly30, and Gly32 each coordinate Ca(2+). His48 is a catalytic residue. A Ca(2+)-binding site is contributed by Asp49. The active site involves Asp92.

The protein belongs to the phospholipase A2 family. Group I subfamily. D49 sub-subfamily. The cofactor is Ca(2+). Expressed by the venom gland.

Its subcellular location is the secreted. The catalysed reaction is a 1,2-diacyl-sn-glycero-3-phosphocholine + H2O = a 1-acyl-sn-glycero-3-phosphocholine + a fatty acid + H(+). PLA2 catalyzes the calcium-dependent hydrolysis of the 2-acyl groups in 3-sn-phosphoglycerides. In Pseudechis australis (Mulga snake), this protein is Basic phospholipase A2 PA-11.